A 691-amino-acid chain; its full sequence is Glycine--tRNA ligase beta subunit (691 aa).

It belongs to the class-II aminoacyl-tRNA synthetase family. Tetramer of two alpha and two beta subunits.

The protein localises to the cytoplasm. It carries out the reaction tRNA(Gly) + glycine + ATP = glycyl-tRNA(Gly) + AMP + diphosphate. The protein is Glycine--tRNA ligase beta subunit of Limosilactobacillus reuteri (strain DSM 20016) (Lactobacillus reuteri).